The primary structure comprises 595 residues: UvrABC system protein C (595 aa).

The GIY-YIG domain maps to 14–91 (NNPGCYLHKD…IQENMPKFNI (78 aa)). The UVR domain occupies 196–231 (DKIVNQLKAKMKDMSDQMEFERAAEYRDLIEAVSTL).

Belongs to the UvrC family. As to quaternary structure, interacts with UvrB in an incision complex.

The protein resides in the cytoplasm. Functionally, the UvrABC repair system catalyzes the recognition and processing of DNA lesions. UvrC both incises the 5' and 3' sides of the lesion. The N-terminal half is responsible for the 3' incision and the C-terminal half is responsible for the 5' incision. This is UvrABC system protein C from Streptococcus thermophilus (strain ATCC BAA-250 / LMG 18311).